The primary structure comprises 287 residues: ATP synthase gamma chain (287 aa).

It belongs to the ATPase gamma chain family. As to quaternary structure, F-type ATPases have 2 components, CF(1) - the catalytic core - and CF(0) - the membrane proton channel. CF(1) has five subunits: alpha(3), beta(3), gamma(1), delta(1), epsilon(1). CF(0) has three main subunits: a, b and c.

The protein resides in the cell inner membrane. Its function is as follows. Produces ATP from ADP in the presence of a proton gradient across the membrane. The gamma chain is believed to be important in regulating ATPase activity and the flow of protons through the CF(0) complex. This is ATP synthase gamma chain from Salmonella gallinarum (strain 287/91 / NCTC 13346).